A 677-amino-acid polypeptide reads, in one-letter code: DNA ligase (677 aa).

NAD(+) contacts are provided by residues 38–42 (DYDFD), 87–88 (SL), and E121. The active-site N6-AMP-lysine intermediate is the K123. Positions 144, 187, 300, and 324 each coordinate NAD(+). Residues C418, C421, C436, and C442 each coordinate Zn(2+). The BRCT domain maps to 601-677 (LINSNFEGLS…ISEEEFEAML (77 aa)).

It belongs to the NAD-dependent DNA ligase family. LigA subfamily. Mg(2+) is required as a cofactor. Requires Mn(2+) as cofactor.

It catalyses the reaction NAD(+) + (deoxyribonucleotide)n-3'-hydroxyl + 5'-phospho-(deoxyribonucleotide)m = (deoxyribonucleotide)n+m + AMP + beta-nicotinamide D-nucleotide.. Its function is as follows. DNA ligase that catalyzes the formation of phosphodiester linkages between 5'-phosphoryl and 3'-hydroxyl groups in double-stranded DNA using NAD as a coenzyme and as the energy source for the reaction. It is essential for DNA replication and repair of damaged DNA. The sequence is that of DNA ligase from Chlorobium luteolum (strain DSM 273 / BCRC 81028 / 2530) (Pelodictyon luteolum).